The chain runs to 206 residues: N-(5'-phosphoribosyl)anthranilate isomerase (206 aa).

This sequence belongs to the TrpF family.

The enzyme catalyses N-(5-phospho-beta-D-ribosyl)anthranilate = 1-(2-carboxyphenylamino)-1-deoxy-D-ribulose 5-phosphate. Its pathway is amino-acid biosynthesis; L-tryptophan biosynthesis; L-tryptophan from chorismate: step 3/5. The protein is N-(5'-phosphoribosyl)anthranilate isomerase of Azotobacter vinelandii (strain DJ / ATCC BAA-1303).